The following is a 352-amino-acid chain: MSGNTLGTLFCVTNFGESHGPAIGCVVDGCPPGLALDAADIQAELDRRRPGTSRHVTQRQEADQVEILSGVYQGVTTGTPIALLIRNTDARSKDYSNIADTFRPGHADFTYTRKYGLRDPRGGGRSSARLTAPTVAAGAIAKKWLAEHHGVRVRGYMSQLGPIAIPFVSWDDVPANPFYAPNAAIVPELEAYMDQLRRDGDSVGARIEVVAENLPAGWGEPLYDRLDADIAHVMMGLNAVKGVSIGAGFGCIAQRGSEHGDEITPDGFVGNNAGGVLGGISTGQPVTVSLAIKPTSSIRVERRSVNSAGEPVMVQTLGRHDPCVGIRATPIAEAMLALVLIDHALRHRAQCG.

Residues Arg48 and Arg54 each coordinate NADP(+). Residues 125 to 127 (RSS), 238 to 239 (NA), Gly278, 293 to 297 (KPTSS), and Arg319 each bind FMN.

The protein belongs to the chorismate synthase family. In terms of assembly, homotetramer. FMNH2 serves as cofactor.

It catalyses the reaction 5-O-(1-carboxyvinyl)-3-phosphoshikimate = chorismate + phosphate. Its pathway is metabolic intermediate biosynthesis; chorismate biosynthesis; chorismate from D-erythrose 4-phosphate and phosphoenolpyruvate: step 7/7. Functionally, catalyzes the anti-1,4-elimination of the C-3 phosphate and the C-6 proR hydrogen from 5-enolpyruvylshikimate-3-phosphate (EPSP) to yield chorismate, which is the branch point compound that serves as the starting substrate for the three terminal pathways of aromatic amino acid biosynthesis. This reaction introduces a second double bond into the aromatic ring system. In Bordetella petrii (strain ATCC BAA-461 / DSM 12804 / CCUG 43448), this protein is Chorismate synthase.